A 359-amino-acid chain; its full sequence is Peroxisome assembly protein 12 (359 aa).

The Peroxisomal matrix segment spans residues 1–24; it reads MSTTIRASQLASSISPKTEEKQPS. Residues 25 to 52 traverse the membrane as a helical segment; the sequence is VFDIIAQENLATSIRPALQHLVKYLAFF. Residues 53 to 56 lie on the Cytoplasmic side of the membrane; it reads KPKT. The helical transmembrane segment at 57-81 threads the bilayer; that stretch reads FLSVHRNFDEYYIIFDLILQNHYLR. Topologically, residues 82–106 are peroxisomal matrix; the sequence is NYGASFTENFYSMKRIASGTGNPPN. A helical transmembrane segment spans residues 107 to 128; that stretch reads DGRERIMSLITLVGWPYVENKL. Over 129 to 133 the chain is Cytoplasmic; it reads NQLYD. The helical transmembrane segment at 134–184 threads the bilayer; that stretch reads RLKEVYECRSWSSINGMKAKCQKMFVIIWPYIKTALKAVKSALQLAYILNR. The Peroxisomal matrix segment spans residues 185–253; it reads SSIHSPWLYF…ILGLPGIVSR (69 aa). The chain crosses the membrane as a helical span at residues 254-281; that stretch reads LFAYGLFFVQFLDYMYNTDLAKLTKTGL. At 282–359 the chain is on the cytoplasmic side; it reads DGAIPSPPHK…NVQHLIRLFV (78 aa). 4 residues coordinate Zn(2+): Cys-307, Cys-310, Cys-328, and Cys-331. The segment at 307–346 adopts an RING-type; degenerate zinc-finger fold; it reads CPICLKKRVNDTALFVSGYVFCYTCINQYVNTYNKCPVTG.

This sequence belongs to the pex2/pex10/pex12 family. In terms of assembly, component of the PEX2-PEX10-PEX12 retrotranslocation channel.

The protein resides in the peroxisome membrane. It participates in protein modification; protein ubiquitination. Component of a retrotranslocation channel required for peroxisome organization by mediating export of the PEX5/prx-5 receptor from peroxisomes to the cytosol, thereby promoting PEX5/prx-5 recycling. The retrotranslocation channel is composed of PEX2/prx-2, PEX10/prx-10 and PEX12/prx-12; each subunit contributing transmembrane segments that coassemble into an open channel that specifically allows the passage of PEX5/prx-5 through the peroxisomal membrane. PEX12/prx-12 also regulates PEX5/prx-5 recycling by activating the E3 ubiquitin-protein ligase activity of PEX10/prx-10. When PEX5 recycling is compromised, PEX12/prx-12 stimulates PEX10-mediated polyubiquitination of PEX5/prx-5, leading to its subsequent degradation. The protein is Peroxisome assembly protein 12 (prx-12) of Caenorhabditis elegans.